The following is a 239-amino-acid chain: Ribose-5-phosphate isomerase A (239 aa).

Substrate contacts are provided by residues 40-43 (SGST), 96-99 (DGAD), and 110-113 (KGGG). Glu-119 functions as the Proton acceptor in the catalytic mechanism. Residue Lys-137 participates in substrate binding.

Belongs to the ribose 5-phosphate isomerase family. In terms of assembly, homodimer.

The enzyme catalyses aldehydo-D-ribose 5-phosphate = D-ribulose 5-phosphate. It functions in the pathway carbohydrate degradation; pentose phosphate pathway; D-ribose 5-phosphate from D-ribulose 5-phosphate (non-oxidative stage): step 1/1. Catalyzes the reversible conversion of ribose-5-phosphate to ribulose 5-phosphate. This is Ribose-5-phosphate isomerase A from Methanococcus maripaludis (strain C6 / ATCC BAA-1332).